Here is a 195-residue protein sequence, read N- to C-terminus: MRLTLTSRSRLFVLSSLLFISTFDVLSAQAAPANTAPSFWQRAGDNLSDTWHHWQSQDLYVPVMTWHNRWTYDKEKTDRYNERPWGAGYGVSRLDCDGDWHSLYMMAFKDSFNKWEPIGGYGYEKRWRPLEDQDFQLGLGFTAGVTLRDNWNYIPLPVLLPMASLSYQRLSFQATYIPGTYNNGNVFFAWLRWQF.

The first 30 residues, Met1–Ala30, serve as a signal peptide directing secretion. Residues His67, Asp110, and Ser111 contribute to the active site.

The protein belongs to the lipid A palmitoyltransferase family. As to quaternary structure, homodimer.

The protein resides in the cell outer membrane. The catalysed reaction is a lipid A + a 1,2-diacyl-sn-glycero-3-phosphocholine = a hepta-acyl lipid A + a 2-acyl-sn-glycero-3-phosphocholine. The enzyme catalyses a lipid IVA + a 1,2-diacyl-sn-glycero-3-phosphocholine = a lipid IVB + a 2-acyl-sn-glycero-3-phosphocholine. It catalyses the reaction a lipid IIA + a 1,2-diacyl-sn-glycero-3-phosphocholine = a lipid IIB + a 2-acyl-sn-glycero-3-phosphocholine. In terms of biological role, transfers a fatty acid residue from the sn-1 position of a phospholipid to the N-linked hydroxyfatty acid chain on the proximal unit of lipid A or its precursors. This chain is Lipid A acyltransferase PagP, found in Dickeya chrysanthemi (strain Ech1591) (Dickeya zeae (strain Ech1591)).